Here is a 460-residue protein sequence, read N- to C-terminus: uncharacterized protein (460 aa).

Positions 8–66 constitute a TRAM domain; it reads PVEKNEFIDVVFEDLTHDGAGVAKVKGYPIFVKNGLPGEEAQIKIIKVKKNFAFGRLMK. [4Fe-4S] cluster-binding residues include C79, C85, C88, and C166. The S-adenosyl-L-methionine site is built by Q290, Y319, E340, and D388. Catalysis depends on C415, which acts as the Nucleophile.

Belongs to the class I-like SAM-binding methyltransferase superfamily. RNA M5U methyltransferase family.

This is an uncharacterized protein from Bacillus cereus (strain ATCC 10987 / NRS 248).